Here is a 106-residue protein sequence, read N- to C-terminus: Late cornified envelope protein 2A (106 aa).

Low complexity predominate over residues 1 to 10; that stretch reads MSCQQNQQQC. A disordered region spans residues 1–25; sequence MSCQQNQQQCQPPPKCPPKCPPKCP. Pro residues predominate over residues 11–25; it reads QPPPKCPPKCPPKCP.

The protein belongs to the LCE family. In terms of assembly, interacts with CYSRT1. As to expression, skin-specific. Expression was readily detected in adult trunk skin, adult arm skin, fetal skin, penal skin, vulva, esophagus and tongue. Not expressed in the cervix, rectum, lung, colon, or placenta.

Functionally, precursors of the cornified envelope of the stratum corneum. This is Late cornified envelope protein 2A (LCE2A) from Homo sapiens (Human).